A 426-amino-acid polypeptide reads, in one-letter code: Serine hydroxymethyltransferase 1 (426 aa).

(6S)-5,6,7,8-tetrahydrofolate is bound by residues leucine 121 and 125-127 (GHL). An N6-(pyridoxal phosphate)lysine modification is found at lysine 230. 355 to 357 (SPF) lines the (6S)-5,6,7,8-tetrahydrofolate pocket.

It belongs to the SHMT family. Homodimer. Pyridoxal 5'-phosphate serves as cofactor.

The protein localises to the cytoplasm. It catalyses the reaction (6R)-5,10-methylene-5,6,7,8-tetrahydrofolate + glycine + H2O = (6S)-5,6,7,8-tetrahydrofolate + L-serine. The protein operates within one-carbon metabolism; tetrahydrofolate interconversion. It functions in the pathway amino-acid biosynthesis; glycine biosynthesis; glycine from L-serine: step 1/1. Functionally, catalyzes the reversible interconversion of serine and glycine with tetrahydrofolate (THF) serving as the one-carbon carrier. This reaction serves as the major source of one-carbon groups required for the biosynthesis of purines, thymidylate, methionine, and other important biomolecules. Also exhibits THF-independent aldolase activity toward beta-hydroxyamino acids, producing glycine and aldehydes, via a retro-aldol mechanism. The polypeptide is Serine hydroxymethyltransferase 1 (Hahella chejuensis (strain KCTC 2396)).